We begin with the raw amino-acid sequence, 413 residues long: Cardiolipin synthase B (413 aa).

2 consecutive PLD phosphodiesterase domains span residues 108 to 135 (VFRRMHRKIVVIDARIAFIGGLNYSSEH) and 285 to 312 (RRRPLHGKVALMDDHWATVGSSNLDPLS). Residues His-113, Lys-115, Asp-120, His-290, Lys-292, and Asp-297 contribute to the active site. Positions 388–413 (TQVDPPAQPTMETQDRVETENTGVNP) are disordered.

Belongs to the phospholipase D family. Cardiolipin synthase subfamily. ClsB sub-subfamily.

It is found in the cell membrane. It carries out the reaction 2 a 1,2-diacyl-sn-glycero-3-phospho-(1'-sn-glycerol) = a cardiolipin + glycerol. In terms of biological role, catalyzes the phosphatidyl group transfer from one phosphatidylglycerol molecule to another to form cardiolipin (CL) (diphosphatidylglycerol) and glycerol. The polypeptide is Cardiolipin synthase B (Shigella flexneri).